We begin with the raw amino-acid sequence, 540 residues long: UDP-N-acetylmuramyl-tripeptide synthetase (540 aa).

Serine 33 serves as a coordination point for UDP-N-acetyl-alpha-D-muramoyl-L-alanyl-D-glutamate. 114–120 (GTEGKSS) contributes to the ATP binding site. Residues 158–159 (TT), serine 185, and arginine 195 each bind UDP-N-acetyl-alpha-D-muramoyl-L-alanyl-D-glutamate. Lysine 227 bears the N6-carboxylysine mark.

Belongs to the MurCDEF family. MurE subfamily. Post-translationally, carboxylation is probably crucial for Mg(2+) binding and, consequently, for the gamma-phosphate positioning of ATP.

It localises to the cytoplasm. The protein operates within cell wall biogenesis; peptidoglycan biosynthesis. Functionally, catalyzes the addition of an amino acid to the nucleotide precursor UDP-N-acetylmuramoyl-L-alanyl-D-glutamate (UMAG) in the biosynthesis of bacterial cell-wall peptidoglycan. This chain is UDP-N-acetylmuramyl-tripeptide synthetase, found in Treponema pallidum (strain Nichols).